The primary structure comprises 372 residues: MPLPDFHVSEPFTLGIELEMQVVNPPGYDLNQDSSMLIDAVKNKITAGEVKHDITESMLELATDVCRDINQAAGQFSAMQKVVLQAAADHHLEICGGGTPPFQKWQRQEVCDNERYQRTLENFGYLIQQATVFGQHVHVGCASGDDAIYLLHGLSRFVPHFIALSAASPYMQGTDTRFAPSRPNIFSAFPDNGPMPWVSNWQQFEALFRCLSYTTMIDSIKDLHWDIRPSPHFGTVEVRVMDTPLTLSHAVNMAGLIQATAHWLLTERPFKHQEKDYLLYKFNRFQACRYGLEGVITDPHTGDRRPLTEDTLRLLEKIAPSAHKIGASSAIEALHRQVVSGLNEAQLMRDFVADGGSLIGLVKKHCEIWAGD.

Belongs to the glutamate--cysteine ligase type 2 family. YbdK subfamily. In terms of assembly, homodimer.

The catalysed reaction is L-cysteine + L-glutamate + ATP = gamma-L-glutamyl-L-cysteine + ADP + phosphate + H(+). In terms of biological role, ATP-dependent carboxylate-amine ligase which exhibits weak glutamate--cysteine ligase activity. This chain is Putative glutamate--cysteine ligase 2 (ybdK), found in Shigella flexneri serotype 5b (strain 8401).